The primary structure comprises 316 residues: Bifunctional riboflavin kinase/FMN adenylyltransferase (316 aa).

It belongs to the RibF family.

The catalysed reaction is riboflavin + ATP = FMN + ADP + H(+). It catalyses the reaction FMN + ATP + H(+) = FAD + diphosphate. Its pathway is cofactor biosynthesis; FAD biosynthesis; FAD from FMN: step 1/1. The protein operates within cofactor biosynthesis; FMN biosynthesis; FMN from riboflavin (ATP route): step 1/1. Its function is as follows. Catalyzes the phosphorylation of riboflavin to FMN followed by the adenylation of FMN to FAD. This chain is Bifunctional riboflavin kinase/FMN adenylyltransferase (ribC), found in Bacillus subtilis (strain 168).